The chain runs to 338 residues: Ketol-acid reductoisomerase (NADP(+)) (338 aa).

In terms of domain architecture, KARI N-terminal Rossmann spans 1–181 (MNVYYDKDCD…GGGRSGIIET (181 aa)). NADP(+)-binding positions include 24–27 (YGSQ), R47, S50, S52, and 82–85 (DEFQ). H107 is a catalytic residue. Position 133 (G133) interacts with NADP(+). The KARI C-terminal knotted domain occupies 182–327 (TFKDETETDL…AKLRSMMPWI (146 aa)). 4 residues coordinate Mg(2+): D190, E194, E226, and E230. Residue S251 participates in substrate binding.

Belongs to the ketol-acid reductoisomerase family. The cofactor is Mg(2+).

It carries out the reaction (2R)-2,3-dihydroxy-3-methylbutanoate + NADP(+) = (2S)-2-acetolactate + NADPH + H(+). The catalysed reaction is (2R,3R)-2,3-dihydroxy-3-methylpentanoate + NADP(+) = (S)-2-ethyl-2-hydroxy-3-oxobutanoate + NADPH + H(+). It participates in amino-acid biosynthesis; L-isoleucine biosynthesis; L-isoleucine from 2-oxobutanoate: step 2/4. It functions in the pathway amino-acid biosynthesis; L-valine biosynthesis; L-valine from pyruvate: step 2/4. Involved in the biosynthesis of branched-chain amino acids (BCAA). Catalyzes an alkyl-migration followed by a ketol-acid reduction of (S)-2-acetolactate (S2AL) to yield (R)-2,3-dihydroxy-isovalerate. In the isomerase reaction, S2AL is rearranged via a Mg-dependent methyl migration to produce 3-hydroxy-3-methyl-2-ketobutyrate (HMKB). In the reductase reaction, this 2-ketoacid undergoes a metal-dependent reduction by NADPH to yield (R)-2,3-dihydroxy-isovalerate. The polypeptide is Ketol-acid reductoisomerase (NADP(+)) (Psychrobacter sp. (strain PRwf-1)).